Consider the following 311-residue polypeptide: HPr kinase/phosphorylase (311 aa).

Catalysis depends on residues His139 and Lys160. 154–161 provides a ligand contact to ATP; it reads GESGVGKS. Ser161 contributes to the Mg(2+) binding site. The active-site Proton acceptor; for phosphorylation activity. Proton donor; for dephosphorylation activity is Asp178. Residues 202–211 are important for the catalytic mechanism of both phosphorylation and dephosphorylation; sequence IEIRGIGILD. Mg(2+) is bound at residue Glu203. Arg244 is an active-site residue. Positions 265 to 270 are important for the catalytic mechanism of dephosphorylation; it reads PVRPGR.

Belongs to the HPrK/P family. Homohexamer. The cofactor is Mg(2+).

It carries out the reaction [HPr protein]-L-serine + ATP = [HPr protein]-O-phospho-L-serine + ADP + H(+). It catalyses the reaction [HPr protein]-O-phospho-L-serine + phosphate + H(+) = [HPr protein]-L-serine + diphosphate. Catalyzes the ATP- as well as the pyrophosphate-dependent phosphorylation of a specific serine residue in HPr, a phosphocarrier protein of the phosphoenolpyruvate-dependent sugar phosphotransferase system (PTS). HprK/P also catalyzes the pyrophosphate-producing, inorganic phosphate-dependent dephosphorylation (phosphorolysis) of seryl-phosphorylated HPr (P-Ser-HPr). The two antagonistic activities of HprK/P are regulated by several intracellular metabolites, which change their concentration in response to the absence or presence of rapidly metabolisable carbon sources (glucose, fructose, etc.) in the growth medium. Therefore, by controlling the phosphorylation state of HPr, HPrK/P is a sensor enzyme that plays a major role in the regulation of carbon metabolism and sugar transport: it mediates carbon catabolite repression (CCR), and regulates PTS-catalyzed carbohydrate uptake and inducer exclusion. In Caldicellulosiruptor bescii (strain ATCC BAA-1888 / DSM 6725 / KCTC 15123 / Z-1320) (Anaerocellum thermophilum), this protein is HPr kinase/phosphorylase.